A 437-amino-acid chain; its full sequence is MLDIQQLRSNLQNIITRLAQRGYDFPVADFESLESQRKSVQTLTQTLQAKRNSASKQIGIARQRGEDVSLIMAEVANMGDELKQAENQLEAVQTRLQQLLLEIPNLPHDSVPAGKDENDNLEMRRWGTPKTFDFPVQDHASIGEHLKLIDFETAAKLSGARFSLLKGGLARLHRALAQFMLDTHTQENGYNEIYVPYLVNADCLRGTGQLPKFEQDLFAVRSGAQEEADNPDKTGPAGLHLIPTAEVPLTNIVRNTIVPLENLPLQFVAHTPCFRSEAGSYGRDTRGLIRQHQFDKVELVQITHPEKSHEALESLVGHAEKILQKLELPYRVMLLCTGDMGFSAAKTYDIEVWLPAQQAYREISSCSNCEAFQARRMQARFRKGQEKPELLHTLNGSGLAVGRTLVAILENYQNEDGSITIPEILRAYMGGIERIGL.

244–246 serves as a coordination point for L-serine; that stretch reads TAE. Position 275–277 (275–277) interacts with ATP; that stretch reads RSE. An L-serine-binding site is contributed by glutamate 298. ATP is bound at residue 362–365; the sequence is EISS. Serine 397 is a binding site for L-serine.

The protein belongs to the class-II aminoacyl-tRNA synthetase family. Type-1 seryl-tRNA synthetase subfamily. Homodimer. The tRNA molecule binds across the dimer.

The protein resides in the cytoplasm. The catalysed reaction is tRNA(Ser) + L-serine + ATP = L-seryl-tRNA(Ser) + AMP + diphosphate + H(+). It catalyses the reaction tRNA(Sec) + L-serine + ATP = L-seryl-tRNA(Sec) + AMP + diphosphate + H(+). The protein operates within aminoacyl-tRNA biosynthesis; selenocysteinyl-tRNA(Sec) biosynthesis; L-seryl-tRNA(Sec) from L-serine and tRNA(Sec): step 1/1. Functionally, catalyzes the attachment of serine to tRNA(Ser). Is also able to aminoacylate tRNA(Sec) with serine, to form the misacylated tRNA L-seryl-tRNA(Sec), which will be further converted into selenocysteinyl-tRNA(Sec). The polypeptide is Serine--tRNA ligase (Nitrosomonas europaea (strain ATCC 19718 / CIP 103999 / KCTC 2705 / NBRC 14298)).